A 380-amino-acid polypeptide reads, in one-letter code: Protein GOLM2 (380 aa).

N-acetylmethionine is present on methionine 1. Residues 1–14 are Cytoplasmic-facing; the sequence is MVGFGANRRAGRLP. The helical; Signal-anchor for type II membrane protein transmembrane segment at 15–35 threads the bilayer; the sequence is SLVLAVLLVVIAVLAFNYWSI. A coiled-coil region spans residues 35-195; sequence ISSRHVLLQE…QFLQEQKQEA (161 aa). The Lumenal portion of the chain corresponds to 36-380; it reads SSRHVLLQEE…YGKQRFNDAL (345 aa). Composition is skewed to basic and acidic residues over residues 192-212 and 227-247; these read KQEAHKFESKGGNELDTDNHA and KNEEPSSHHIPHGKEQIKRGG. Positions 192–254 are disordered; it reads KQEAHKFESK…RGGDAGMPGI (63 aa). 2 positions are modified to phosphoserine: serine 233 and serine 275. The disordered stretch occupies residues 280 to 380; the sequence is ESHQVISHLP…YGKQRFNDAL (101 aa). Over residues 305–321 the composition is skewed to polar residues; it reads NHNGNSRTSKQNPSNPL. Basic and acidic residues predominate over residues 344-380; the sequence is ATKDRAGDFHKLKQNDEERELQMDPADYGKQRFNDAL.

Belongs to the GOLM family.

It is found in the membrane. The protein is Protein GOLM2 (GOLM2) of Bos taurus (Bovine).